A 103-amino-acid chain; its full sequence is MYAVLQSGGKQHRVSEGQTVRLEKLDIATGETVEFDQVMMIANGDDIQIGGPFVTGGKITAEVVAHGRGDKVMIVKFRRRKYFRKHQGHRQWFTDVKITGIGA.

The protein belongs to the bacterial ribosomal protein bL21 family. In terms of assembly, part of the 50S ribosomal subunit. Contacts protein L20.

In terms of biological role, this protein binds to 23S rRNA in the presence of protein L20. The polypeptide is Large ribosomal subunit protein bL21 (Sodalis glossinidius (strain morsitans)).